The following is a 523-amino-acid chain: Aldehyde oxidase GLOX (523 aa).

The first 19 residues, 1-19 (MILDAAIVALADLPGTWEL), serve as a signal peptide directing secretion.

The protein localises to the secreted. It localises to the cell wall. It catalyses the reaction an aldehyde + O2 + H2O = a carboxylate + H2O2 + H(+). Functionally, catalyzes the oxidation of aldehydes to the corresponding carboxylate by coupling the reaction to the reduction of dioxygen to hydrogen peroxide. Substrates include glyoxal and other aldehydes. Involved in disease resistance against the grapevine powdery mildew E.necator. Is sufficient to confer disease resistance to E.necator. Can produce hydrogen peroxide in response to E.necator infection, and this may directly play a role in the defense mechanism during plant-pathogen interactions. The polypeptide is Aldehyde oxidase GLOX (Vitis pseudoreticulata (Chinese wild grapevine)).